The chain runs to 85 residues: uncharacterized protein (85 aa).

Residues 1-35 (MIEDPSKKISLWQKWINVDPKKRILFSLGLFALSA) form the signal peptide.

The protein resides in the secreted. This is an uncharacterized protein from Dictyostelium discoideum (Social amoeba).